A 482-amino-acid chain; its full sequence is Serine carboxypeptidase-like 36 (482 aa).

The N-terminal stretch at 1 to 25 (MGKRQDWSVTACIFLFLSLASQIHC) is a signal peptide. 3 disulfides stabilise this stretch: C119-C363, C275-C286, and C310-C331. Residue S210 is part of the active site. N228 is a glycosylation site (N-linked (GlcNAc...) asparagine). Residues N312 and N352 are each glycosylated (N-linked (GlcNAc...) asparagine). Residue D402 is part of the active site. N-linked (GlcNAc...) asparagine glycosylation is found at N418 and N444. Residue H455 is part of the active site.

Belongs to the peptidase S10 family. Expressed in seedlings, flowers and siliques.

It localises to the secreted. In terms of biological role, probable carboxypeptidase. The polypeptide is Serine carboxypeptidase-like 36 (SCPL36) (Arabidopsis thaliana (Mouse-ear cress)).